The primary structure comprises 316 residues: Ornithine carbamoyltransferase (316 aa).

Residues 59–62 (STRT), glutamine 86, arginine 110, and 137–140 (HPCQ) contribute to the carbamoyl phosphate site. Residues asparagine 168, aspartate 232, and 236–237 (SM) contribute to the L-ornithine site. Residues 273–274 (CL) and arginine 301 each bind carbamoyl phosphate.

It belongs to the aspartate/ornithine carbamoyltransferase superfamily. OTCase family.

The protein resides in the cytoplasm. It carries out the reaction carbamoyl phosphate + L-ornithine = L-citrulline + phosphate + H(+). It functions in the pathway amino-acid degradation; L-arginine degradation via ADI pathway; carbamoyl phosphate from L-arginine: step 2/2. Reversibly catalyzes the transfer of the carbamoyl group from carbamoyl phosphate (CP) to the N(epsilon) atom of ornithine (ORN) to produce L-citrulline. The protein is Ornithine carbamoyltransferase of Listeria monocytogenes serotype 4a (strain HCC23).